The primary structure comprises 619 residues: Chaperone protein HscA homolog (619 aa).

Belongs to the heat shock protein 70 family.

Chaperone involved in the maturation of iron-sulfur cluster-containing proteins. Has a low intrinsic ATPase activity which is markedly stimulated by HscB. The sequence is that of Chaperone protein HscA homolog from Haemophilus influenzae (strain PittGG).